A 91-amino-acid chain; its full sequence is RNA-binding protein Hfq (91 aa).

Residues 9-69 (DRFLNMLRTG…ISTIMPSSFV (61 aa)) form the Sm domain.

The protein belongs to the Hfq family. Homohexamer.

Functionally, RNA chaperone that binds small regulatory RNA (sRNAs) and mRNAs to facilitate mRNA translational regulation in response to envelope stress, environmental stress and changes in metabolite concentrations. Also binds with high specificity to tRNAs. This Pseudothermotoga lettingae (strain ATCC BAA-301 / DSM 14385 / NBRC 107922 / TMO) (Thermotoga lettingae) protein is RNA-binding protein Hfq.